A 461-amino-acid polypeptide reads, in one-letter code: Phosphatidate cytidylyltransferase 1 (461 aa).

The interval 1–68 is disordered; it reads MLELRHRGGC…PEVPPSSDRT (68 aa). R7 is modified (omega-N-methylarginine). The span at 22–56 shows a compositional bias: basic and acidic residues; that stretch reads REGEAAGGDHETESTSDKETDIDDRYGDLDARGDS. A phosphoserine mark is found at S35 and S37. 6 consecutive transmembrane segments (helical) span residues 96 to 116, 149 to 169, 183 to 203, 230 to 250, 279 to 299, and 357 to 377; these read MISL…LLVL, FLLC…FATF, HRFI…LSLV, LVIQ…SSVI, GFIG…YVLS, and IALS…ASGF.

This sequence belongs to the CDS family. Homodimer. Interacts with FOS; this interaction may enhance catalytic activity. Mg(2+) serves as cofactor. In terms of tissue distribution, brain, retina and testis. Found in cerebellar Purkinje cells, pineal body, inner segment of photoreceptor cells and postmitotic spermatocytes and spermatids.

The protein localises to the endoplasmic reticulum membrane. The enzyme catalyses a 1,2-diacyl-sn-glycero-3-phosphate + CTP + H(+) = a CDP-1,2-diacyl-sn-glycerol + diphosphate. It catalyses the reaction 1-octadecanoyl-2-(5Z,8Z,11Z,14Z-eicosatetraenoyl)-sn-glycero-3-phosphate + CTP + H(+) = 1-octadecanoyl-2-(5Z,8Z,11Z,14Z-eicosatetraenoyl)-sn-glycero-3-cytidine-5'-diphosphate + diphosphate. It carries out the reaction 1-octadecanoyl-2-(9Z,12Z-octadecadienoyl)-sn-glycero-3-phosphate + CTP + H(+) = 1-octadecanoyl-2-(9Z,12Z-octadecadienoyl)-sn-glycero-3-cytidine-5'-diphosphate + diphosphate. The catalysed reaction is 1-hexadecanoyl-2-(5Z,8Z,11Z,14Z-eicosatetraenoyl)-sn-glycero-3-phosphate + CTP + H(+) = 1-hexadecanoyl-2-(5Z,8Z,11Z,14Z-eicosatetraenoyl)-sn-glycero-3-cytidine-5'-diphosphate + diphosphate. The enzyme catalyses 1,2-di-(5Z,8Z,11Z,14Z)-eicosatetraenoyl-sn-glycero-3-phosphate + CTP + H(+) = 1,2-di-(5Z,8Z,11Z,14Z-eicosatetraenoyl)-sn-glycero-3-cytidine-5'-diphosphate + diphosphate. It catalyses the reaction 1-octadecanoyl-2-(9Z-octadecenoyl)-sn-glycero-3-phosphate + CTP + H(+) = 1-octadecanoyl-2-(9Z-octadecenoyl)-sn-glycero-3-cytidine-5'-diphosphate + diphosphate. It carries out the reaction 1-octadecanoyl-2-(4Z,7Z,10Z,13Z,16Z,19Z-docosahexaenoyl)-sn-glycero-3-phosphate + CTP + H(+) = 1-octadecanoyl-2-(4Z,7Z,10Z,13Z,16Z,19Z-docosahexaenoyl)-sn-glycero-3-cytidine-5'-diphosphate + diphosphate. The catalysed reaction is 1,2-di-(9Z,12Z-octadecadienoyl)-sn-glycero-3-phosphate + CTP + H(+) = 1,2-di-(9Z,12Z-octadecadienoyl)-sn-glycero-3-cytidine-5'-diphosphate + diphosphate. The enzyme catalyses 1,2-di-(9Z-octadecenoyl)-sn-glycero-3-phosphate + CTP + H(+) = 1,2-di-(9Z-octadecenoyl)-sn-glycero-3-cytidine-5'-diphosphate + diphosphate. It participates in phospholipid metabolism; CDP-diacylglycerol biosynthesis; CDP-diacylglycerol from sn-glycerol 3-phosphate: step 3/3. With respect to regulation, activated by GTP. Inhibited by CDP-diacylglycerol and by phosphatidylglycerol 4,5-bisphosphate (PPI2). Its function is as follows. Catalyzes the conversion of phosphatidic acid (PA) to CDP-diacylglycerol (CDP-DAG), an essential intermediate in the synthesis of phosphatidylglycerol, cardiolipin and phosphatidylinositol. Exhibits almost no acyl chain preference for PA, showing no discrimination for the sn-1/sn-2 acyl chain composition of PAs. Plays an important role in regulatinng the growth of lipid droplets which are storage organelles at the center of lipid and energy homeostasis. Positively regulates the differentiation and development of adipocytes. In Rattus norvegicus (Rat), this protein is Phosphatidate cytidylyltransferase 1.